Reading from the N-terminus, the 95-residue chain is Large ribosomal subunit protein bL25 (95 aa).

The protein belongs to the bacterial ribosomal protein bL25 family. Part of the 50S ribosomal subunit; part of the 5S rRNA/L5/L18/L25 subcomplex. Contacts the 5S rRNA. Binds to the 5S rRNA independently of L5 and L18.

This is one of the proteins that binds to the 5S RNA in the ribosome where it forms part of the central protuberance. In Tolumonas auensis (strain DSM 9187 / NBRC 110442 / TA 4), this protein is Large ribosomal subunit protein bL25.